Here is a 485-residue protein sequence, read N- to C-terminus: Rhamnulokinase (485 aa).

Position 12–16 (Ala12–Arg16) interacts with ATP. Residues Gly80 and His238–Thr240 contribute to the substrate site. Asp239 functions as the Proton acceptor in the catalytic mechanism. Thr261 lines the ATP pocket. Asn298 serves as a coordination point for substrate. An ATP-binding site is contributed by Glu306. Cys355 and Cys372 form a disulfide bridge. Gly404 is an ATP binding site.

The protein belongs to the rhamnulokinase family. The cofactor is Mg(2+).

The catalysed reaction is L-rhamnulose + ATP = L-rhamnulose 1-phosphate + ADP + H(+). It functions in the pathway carbohydrate degradation; L-rhamnose degradation; glycerone phosphate from L-rhamnose: step 2/3. In terms of biological role, involved in the catabolism of L-rhamnose (6-deoxy-L-mannose). Catalyzes the transfer of the gamma-phosphate group from ATP to the 1-hydroxyl group of L-rhamnulose to yield L-rhamnulose 1-phosphate. The polypeptide is Rhamnulokinase (Bacteroides thetaiotaomicron (strain ATCC 29148 / DSM 2079 / JCM 5827 / CCUG 10774 / NCTC 10582 / VPI-5482 / E50)).